The chain runs to 173 residues: Catabolic 3-dehydroquinase (173 aa).

Tyr26 (proton acceptor) is an active-site residue. 3 residues coordinate substrate: Asn102, His108, and Asp115. The Proton donor role is filled by His128. Substrate-binding positions include 129–130 (VS) and Arg139.

This sequence belongs to the type-II 3-dehydroquinase family. In terms of assembly, homododecamer. Adopts a ring-like structure, composed of an arrangement of two hexameric rings stacked on top of one another.

It carries out the reaction 3-dehydroquinate = 3-dehydroshikimate + H2O. It participates in aromatic compound metabolism; 3,4-dihydroxybenzoate biosynthesis; 3,4-dihydroxybenzoate from 3-dehydroquinate: step 1/2. Its function is as follows. 3-dehydroquinate dehydratase; part of the qa gene cluster that mediates the catabolism of quinic acid (QA) and as such, allows the use of QA as a sole carbon source. Catalyzes the second reaction in the inducible quinic acid catabolic pathway by converting 3-dehydroquinate into 3-dehydroshikimate. The qa cluster encodes 3 inducible enymes (qa-2, qa-3 and qa-4) catalyzing the first three reactions in the catabolism of quinic acid to protocatechuic acid (also known as 3,4-Dihydroxybenzoic acid). This is Catabolic 3-dehydroquinase from Neurospora crassa (strain ATCC 24698 / 74-OR23-1A / CBS 708.71 / DSM 1257 / FGSC 987).